Here is a 562-residue protein sequence, read N- to C-terminus: UPF0649 protein C1442.02 (562 aa).

Phosphoserine is present on residues Ser-285 and Ser-286. Residues 288-308 (DEEIAKNADVPAEVDNNSTKA) are disordered.

Belongs to the UPF0649 family.

The protein localises to the cytoplasm. The protein resides in the nucleus. In Schizosaccharomyces pombe (strain 972 / ATCC 24843) (Fission yeast), this protein is UPF0649 protein C1442.02.